The sequence spans 132 residues: Small ribosomal subunit protein uS8c (132 aa).

The protein belongs to the universal ribosomal protein uS8 family. As to quaternary structure, part of the 30S ribosomal subunit.

It is found in the plastid. Its subcellular location is the chloroplast. One of the primary rRNA binding proteins, it binds directly to 16S rRNA central domain where it helps coordinate assembly of the platform of the 30S subunit. This chain is Small ribosomal subunit protein uS8c (rps8), found in Staurastrum punctulatum (Green alga).